Consider the following 116-residue polypeptide: Large ribosomal subunit protein uL24 (116 aa).

Positions 1 to 21 (MATNNGAGKARHKFHVKKGDT) are disordered.

Belongs to the universal ribosomal protein uL24 family. Part of the 50S ribosomal subunit.

One of two assembly initiator proteins, it binds directly to the 5'-end of the 23S rRNA, where it nucleates assembly of the 50S subunit. Functionally, one of the proteins that surrounds the polypeptide exit tunnel on the outside of the subunit. This chain is Large ribosomal subunit protein uL24, found in Gloeobacter violaceus (strain ATCC 29082 / PCC 7421).